The following is a 185-amino-acid chain: Large ribosomal subunit protein uL5 (185 aa).

Belongs to the universal ribosomal protein uL5 family. In terms of assembly, part of the 50S ribosomal subunit; part of the 5S rRNA/L5/L18/L25 subcomplex. Contacts the 5S rRNA and the P site tRNA. Forms a bridge to the 30S subunit in the 70S ribosome.

In terms of biological role, this is one of the proteins that bind and probably mediate the attachment of the 5S RNA into the large ribosomal subunit, where it forms part of the central protuberance. In the 70S ribosome it contacts protein S13 of the 30S subunit (bridge B1b), connecting the 2 subunits; this bridge is implicated in subunit movement. Contacts the P site tRNA; the 5S rRNA and some of its associated proteins might help stabilize positioning of ribosome-bound tRNAs. The chain is Large ribosomal subunit protein uL5 from Treponema pallidum (strain Nichols).